A 202-amino-acid chain; its full sequence is Urease accessory protein UreE (202 aa).

Positions 138 to 202 are disordered; the sequence is RGAYHSHGGH…HGHHHGHKHD (65 aa). Over residues 147-193 the composition is skewed to basic and acidic residues; that stretch reads HSHDHGHAAHDHGHAAHDHGHNHDHDHGHAHGHDHQHDHNCDHDHDH.

It belongs to the UreE family.

It is found in the cytoplasm. Involved in urease metallocenter assembly. Binds nickel. Probably functions as a nickel donor during metallocenter assembly. The sequence is that of Urease accessory protein UreE from Rhizobium etli (strain CIAT 652).